The sequence spans 174 residues: Adenylosuccinate synthetase (174 aa).

GTP is bound by residues 13–19 (GDEGKGK) and 41–43 (GHT). Residue aspartate 14 is the Proton acceptor of the active site. 2 residues coordinate Mg(2+): aspartate 14 and glycine 41. IMP is bound by residues 14–17 (DEGK), 39–42 (NAGH), threonine 130, and arginine 144. Residue histidine 42 is the Proton donor of the active site.

The protein belongs to the adenylosuccinate synthetase family. As to quaternary structure, homodimer. Requires Mg(2+) as cofactor.

It is found in the cytoplasm. The enzyme catalyses IMP + L-aspartate + GTP = N(6)-(1,2-dicarboxyethyl)-AMP + GDP + phosphate + 2 H(+). Its pathway is purine metabolism; AMP biosynthesis via de novo pathway; AMP from IMP: step 1/2. Plays an important role in the de novo pathway of purine nucleotide biosynthesis. Catalyzes the first committed step in the biosynthesis of AMP from IMP. The chain is Adenylosuccinate synthetase from Stutzerimonas stutzeri (Pseudomonas stutzeri).